The primary structure comprises 601 residues: Somatic embryogenesis receptor kinase 5 (601 aa).

The signal sequence occupies residues 1–24 (MEHGSSRGFIWLILFLDFVSRVTG). Over 25-215 (KTQVDALIAL…SPSPSPSGTS (191 aa)) the chain is Extracellular. N-linked (GlcNAc...) asparagine glycans are attached at residues N52, N81, N105, N129, N151, and N184. 5 LRR repeats span residues 71–94 (SVTR…AQLP), 95–118 (NLQY…GDLM), 119–141 (ELVS…LGKL), 143–165 (KLRF…LTAL), and 166–188 (PLDV…GSFS). A helical transmembrane segment spans residues 216 to 236 (AAIVVGVAAGAALLFALAWWL). The Cytoplasmic portion of the chain corresponds to 237-601 (RRKLQGHFLD…IENDYPSGPR (365 aa)). T272 bears the Phosphothreonine mark. The region spanning 275 to 572 (FSKRNVLGKG…KEEMPIHDFN (298 aa)) is the Protein kinase domain. Position 281–289 (281–289 (LGKGRFGIL)) interacts with ATP. T298 bears the Phosphothreonine mark. K303 is an ATP binding site. A phosphoserine mark is found at S356 and S359. D402 (proton acceptor) is an active-site residue. A phosphothreonine mark is found at T435, T436, and T441. Y449 is modified (phosphotyrosine). S451 is modified (phosphoserine). T452 is modified (phosphothreonine). Residues S456 and S506 each carry the phosphoserine modification. The residue at position 532 (T532) is a Phosphothreonine.

This sequence belongs to the protein kinase superfamily. Ser/Thr protein kinase family. In terms of assembly, interacts with TMK4/BARK1. Autophosphorylated.

It is found in the cell membrane. The catalysed reaction is L-seryl-[protein] + ATP = O-phospho-L-seryl-[protein] + ADP + H(+). The enzyme catalyses L-threonyl-[protein] + ATP = O-phospho-L-threonyl-[protein] + ADP + H(+). In terms of biological role, serine/threonine-kinase of unknown function. The protein is Somatic embryogenesis receptor kinase 5 (SERK5) of Arabidopsis thaliana (Mouse-ear cress).